We begin with the raw amino-acid sequence, 330 residues long: Aspartate--ammonia ligase (330 aa).

It belongs to the class-II aminoacyl-tRNA synthetase family. AsnA subfamily.

Its subcellular location is the cytoplasm. It catalyses the reaction L-aspartate + NH4(+) + ATP = L-asparagine + AMP + diphosphate + H(+). It participates in amino-acid biosynthesis; L-asparagine biosynthesis; L-asparagine from L-aspartate (ammonia route): step 1/1. This Streptococcus pyogenes serotype M2 (strain MGAS10270) protein is Aspartate--ammonia ligase.